A 742-amino-acid chain; its full sequence is Photosystem I P700 chlorophyll a apoprotein A2 (742 aa).

A run of 8 helical transmembrane segments spans residues 46–69 (LFSTHFGHLAIIGLWVAGNLFHIA), 135–158 (LFQGAIFINILVCWLLFAGWLHLQ), 175–199 (LNHHLAVLFGFSSIAWTGHLIHVAI), 273–291 (IAHHHLAIGVVFIIAGHMY), 336–359 (LHFQLGLALASLGVACSLVAQHMG), 375–401 (SALYTHHQYIAMFLMVGAFSHGAIFFV), 423–445 (ALISHLSWVTMLLGFHTLGIYVH), and 525–543 (FLVHHAIALGLHTTALILI). 2 residues coordinate [4Fe-4S] cluster: Cys-567 and Cys-576. 2 consecutive transmembrane segments (helical) span residues 583–604 (ATYLAMFWALNTIAWITFYWHW) and 651–673 (LSPWAWMFLFGHLIWATGFMFLI). Divinyl chlorophyll a contacts are provided by His-662, Met-670, and Tyr-678. Trp-679 contributes to the phylloquinone binding site. A helical membrane pass occupies residues 715–735 (LVGLTHFTVGNFVTFGAFVIA).

Belongs to the PsaA/PsaB family. As to quaternary structure, the PsaA/B heterodimer binds the P700 divinyl chlorophyll special pair and subsequent electron acceptors. PSI consists of a core antenna complex that captures photons, and an electron transfer chain that converts photonic excitation into a charge separation. The cyanobacterial PSI reaction center is composed of one copy each of PsaA,B,C,D,E,F,I,J,K,L,M and X, and forms trimeric complexes. PSI electron transfer chain: 5 divinyl chlorophyll a, 1 divinyl chlorophyll a', 2 phylloquinones and 3 4Fe-4S clusters. PSI core antenna: 90 divinyl chlorophyll a, 22 carotenoids, 3 phospholipids and 1 galactolipid. P700 is a divinyl chlorophyll a/divinyl chlorophyll a' dimer, A0 is one or more divinyl chlorophyll a, A1 is one or both phylloquinones and FX is a shared 4Fe-4S iron-sulfur center. serves as cofactor.

It is found in the cellular thylakoid membrane. The catalysed reaction is reduced [plastocyanin] + hnu + oxidized [2Fe-2S]-[ferredoxin] = oxidized [plastocyanin] + reduced [2Fe-2S]-[ferredoxin]. Functionally, psaA and PsaB bind P700, the primary electron donor of photosystem I (PSI), as well as the electron acceptors A0, A1 and FX. PSI is a plastocyanin/cytochrome c6-ferredoxin oxidoreductase, converting photonic excitation into a charge separation, which transfers an electron from the donor P700 chlorophyll pair to the spectroscopically characterized acceptors A0, A1, FX, FA and FB in turn. Oxidized P700 is reduced on the lumenal side of the thylakoid membrane by plastocyanin or cytochrome c6. This is Photosystem I P700 chlorophyll a apoprotein A2 from Prochlorococcus marinus (strain NATL2A).